Here is a 391-residue protein sequence, read N- to C-terminus: Cold-shock protein CS120 (391 aa).

17 tandem repeats follow at residues 9–31, 49–62, 72–94, 95–108, 115–128, 135–148, 156–178, 179–192, 199–212, 220–242, 243–256, 263–276, 284–306, 307–320, 327–340, 350–363, and 374–391. The 6 X 23 AA approximate repeats stretch occupies residues 9 to 391; the sequence is GEKKGIMEKI…KIKDKLPGQH (383 aa). Residues 21 to 33 show a composition bias toward basic and acidic residues; the sequence is KLPGGHGDHKETA. The interval 21 to 391 is disordered; that stretch reads KLPGGHGDHK…KIKDKLPGQH (371 aa). The segment covering 34–59 has biased composition (low complexity); that stretch reads GTHGHPGTATHGAPATGGAYGQQGHA. An 11 X 14 AA approximate repeats region spans residues 49 to 363; sequence TGGAYGQQGH…HGQHGHTGTT (315 aa). Basic and acidic residues predominate over residues 70-92; that stretch reads HAGEKKGVMENIKDKLPGGHQDH. Positions 93-145 are enriched in low complexity; sequence QQTGGTYGQQGHTGTATHGTPATGGTYGQQGHTGTATHGTPATGGTYGEQGHT. Residues 155-176 show a composition bias toward basic and acidic residues; the sequence is TGEKKGVMENIKEKLPGGHGDH. Positions 177–196 are enriched in low complexity; the sequence is QQTGGTYGQQGHTGTATHGT. The segment covering 219-240 has biased composition (basic and acidic residues); that stretch reads TGEKKGVMENIKDKLPGGHGDH. 2 stretches are compositionally biased toward low complexity: residues 241-260 and 272-282; these read QQTG…TQGT and HTGMTGAGTHS. The segment covering 283 to 304 has biased composition (basic and acidic residues); that stretch reads TGEKKGVMENIKEKLPGGHSDH. Composition is skewed to low complexity over residues 305–324 and 333–351; these read QQTG…THGT and QHGH…TATG. Residues 361–372 show a composition bias toward gly residues; that stretch reads GTTGTGTHGSDG. Positions 373 to 391 are enriched in basic and acidic residues; the sequence is IGEKKSLMDKIKDKLPGQH.

This sequence belongs to the plant dehydrin family.

Functionally, may reduce intracellular freezing damage during winter by hydrogen-bonding to the lattice of the nascent ice crystals, thus modifying the structure and/or propagation of ice crystals. The sequence is that of Cold-shock protein CS120 (CS120) from Triticum aestivum (Wheat).